We begin with the raw amino-acid sequence, 313 residues long: Probable F-box protein At3g44130 (313 aa).

One can recognise an F-box domain in the interval 1–46 (MASGNLPWELEEEILCRLPLGSLVRLRSVCKHWNDFFNDKWFIKKS).

The sequence is that of Probable F-box protein At3g44130 from Arabidopsis thaliana (Mouse-ear cress).